The sequence spans 255 residues: Zinc import ATP-binding protein ZnuC (255 aa).

In terms of domain architecture, ABC transporter spans 4 to 219 (VDVDGLSLRY…PEYRALFGTG (216 aa)). An ATP-binding site is contributed by 36–43 (GPNGSGKT). Positions 234–255 (EHDHHDGCAHGQATEDRTEAAE) are disordered.

Belongs to the ABC transporter superfamily. Zinc importer (TC 3.A.1.15.5) family. The complex is composed of two ATP-binding proteins (ZnuC), two transmembrane proteins (ZnuB) and a solute-binding protein (ZnuA).

It localises to the cell inner membrane. It catalyses the reaction Zn(2+)(out) + ATP(in) + H2O(in) = Zn(2+)(in) + ADP(in) + phosphate(in) + H(+)(in). Functionally, part of the ABC transporter complex ZnuABC involved in zinc import. Responsible for energy coupling to the transport system. The polypeptide is Zinc import ATP-binding protein ZnuC (Roseobacter denitrificans (strain ATCC 33942 / OCh 114) (Erythrobacter sp. (strain OCh 114))).